A 503-amino-acid polypeptide reads, in one-letter code: Cell wall integrity and stress response component 2 (503 aa).

Positions 1-23 (MHLDLIHKSFILVWLIYIRAALA) are cleaved as a signal peptide. Residues 24-325 (DQFTYKACYS…KGLSGGAIAG (302 aa)) are Extracellular-facing. One can recognise a WSC domain in the interval 25–118 (QFTYKACYSA…SSAMNVYINN (94 aa)). A disordered region spans residues 124-260 (DSTSSTATST…STPSSTSIGT (137 aa)). The helical transmembrane segment at 326 to 346 (VVVGVVCGTVALLALALFFFV) threads the bilayer. Residues 347–503 (WKKRRQSSQH…AKDSNNSSLR (157 aa)) lie on the Cytoplasmic side of the membrane. Phosphothreonine is present on T402. Phosphoserine is present on residues S455 and S458. The segment at 470–503 (IVNPDNVSSNIGSNVSDGDDDYDDAKDSNNSSLR) is disordered.

Post-translationally, N-glycosylated.

The protein localises to the cell membrane. This is Cell wall integrity and stress response component 2 (WSC2) from Saccharomyces cerevisiae (strain ATCC 204508 / S288c) (Baker's yeast).